A 515-amino-acid chain; its full sequence is Ribonuclease Y (515 aa).

A helical membrane pass occupies residues Leu6–Gly26. The KH domain occupies Thr205–Ile290. Positions Val331 to Ser424 constitute an HD domain.

Belongs to the RNase Y family.

The protein localises to the cell membrane. Its function is as follows. Endoribonuclease that initiates mRNA decay. The polypeptide is Ribonuclease Y (Syntrophomonas wolfei subsp. wolfei (strain DSM 2245B / Goettingen)).